We begin with the raw amino-acid sequence, 101 residues long: Protein SPIRAL1-like 3 (101 aa).

The segment covering 1–22 (MGRGVSSGGGQSSLGYLFGGGE) has biased composition (gly residues). Disordered stretches follow at residues 1–54 (MGRG…GIQS) and 73–101 (TDRP…KDGK).

This sequence belongs to the SPIRAL1 family.

Functionally, acts in maintaining the cortical microtubules organization essential for anisotropic cell growth. The chain is Protein SPIRAL1-like 3 from Oryza sativa subsp. japonica (Rice).